The chain runs to 99 residues: HssA/B-like protein 42 (99 aa).

Positions 1 to 29 (MTLFSSISSMSTSMSGSKSSISSFGSGTS) are disordered.

The protein belongs to the hssA/B family.

In Dictyostelium discoideum (Social amoeba), this protein is HssA/B-like protein 42 (hssl42).